The following is a 112-amino-acid chain: MKTAVLLVCLAYVMAAILSLCASAPSWRPQGRFGKRTIPDRLPQTEESSLPDFGFSHLPALPLELFYNPRDLVHSGFRPRLCSVSGVEGYPPCVESHSDRKMKNLLDDLFGL.

The signal sequence occupies residues 1–23 (MKTAVLLVCLAYVMAAILSLCAS). A Phenylalanine amide modification is found at Phe-33.

In terms of processing, the prohormone is proteolytically cleaved in 2 steps, yielding first 2 products: luqin and PRMP. In the second step, PRMP is cleaved to yield luqin-B and luqin-C. Neurons L2-4 and L6, also called giant dorsal LUQ (Left Upper Quadrant) neurons of the abdominal ganglion. Also expressed in smaller neurons in the CNS and in peripheral organs such as the kidney.

The protein localises to the secreted. The polypeptide is Abdominal ganglion neuropeptides L5-67 (Aplysia californica (California sea hare)).